Reading from the N-terminus, the 647-residue chain is Phosphomethylpyrimidine synthase (647 aa).

Substrate is bound by residues Asn235, Met264, Tyr293, His329, 349–351, 390–393, and Glu429; these read SRG and DGLR. His433 is a binding site for Zn(2+). Tyr456 contacts substrate. His497 is a binding site for Zn(2+). [4Fe-4S] cluster contacts are provided by Cys577, Cys580, and Cys585. The segment at 623 to 647 is disordered; it reads KSAEFKASGSELYHPAVSHEEVAEG.

This sequence belongs to the ThiC family. As to quaternary structure, homodimer. [4Fe-4S] cluster serves as cofactor.

It carries out the reaction 5-amino-1-(5-phospho-beta-D-ribosyl)imidazole + S-adenosyl-L-methionine = 4-amino-2-methyl-5-(phosphooxymethyl)pyrimidine + CO + 5'-deoxyadenosine + formate + L-methionine + 3 H(+). It participates in cofactor biosynthesis; thiamine diphosphate biosynthesis. Catalyzes the synthesis of the hydroxymethylpyrimidine phosphate (HMP-P) moiety of thiamine from aminoimidazole ribotide (AIR) in a radical S-adenosyl-L-methionine (SAM)-dependent reaction. In Vibrio vulnificus (strain CMCP6), this protein is Phosphomethylpyrimidine synthase.